Here is a 488-residue protein sequence, read N- to C-terminus: Ribulose bisphosphate carboxylase large chain (488 aa).

Residues asparagine 127 and threonine 177 each contribute to the substrate site. Lysine 179 serves as the catalytic Proton acceptor. Position 181 (lysine 181) interacts with substrate. Residues lysine 205, aspartate 207, and glutamate 208 each coordinate Mg(2+). Position 205 is an N6-carboxylysine (lysine 205). Residue histidine 297 is the Proton acceptor of the active site. Arginine 298, histidine 330, and serine 382 together coordinate substrate.

It belongs to the RuBisCO large chain family. Type I subfamily. In terms of assembly, heterohexadecamer of 8 large chains and 8 small chains. It depends on Mg(2+) as a cofactor.

The protein localises to the plastid. It is found in the chloroplast. It carries out the reaction 2 (2R)-3-phosphoglycerate + 2 H(+) = D-ribulose 1,5-bisphosphate + CO2 + H2O. It catalyses the reaction D-ribulose 1,5-bisphosphate + O2 = 2-phosphoglycolate + (2R)-3-phosphoglycerate + 2 H(+). In terms of biological role, ruBisCO catalyzes two reactions: the carboxylation of D-ribulose 1,5-bisphosphate, the primary event in carbon dioxide fixation, as well as the oxidative fragmentation of the pentose substrate in the photorespiration process. Both reactions occur simultaneously and in competition at the same active site. This Pyropia yezoensis (Susabi-nori) protein is Ribulose bisphosphate carboxylase large chain.